The sequence spans 172 residues: Adenine phosphoribosyltransferase (172 aa).

It belongs to the purine/pyrimidine phosphoribosyltransferase family. Homodimer.

Its subcellular location is the cytoplasm. The catalysed reaction is AMP + diphosphate = 5-phospho-alpha-D-ribose 1-diphosphate + adenine. Its pathway is purine metabolism; AMP biosynthesis via salvage pathway; AMP from adenine: step 1/1. Its function is as follows. Catalyzes a salvage reaction resulting in the formation of AMP, that is energically less costly than de novo synthesis. In Roseiflexus castenholzii (strain DSM 13941 / HLO8), this protein is Adenine phosphoribosyltransferase.